The chain runs to 215 residues: Large ribosomal subunit protein bL25 (215 aa).

Composition is skewed to polar residues over residues 1–19 and 206–215; these read MAKS…NTGK and ENKTAATESE. 2 disordered regions span residues 1-29 and 190-215; these read MAKS…RRDG and AKYA…TESE.

Belongs to the bacterial ribosomal protein bL25 family. CTC subfamily. Part of the 50S ribosomal subunit; part of the 5S rRNA/L5/L18/L25 subcomplex. Contacts the 5S rRNA. Binds to the 5S rRNA independently of L5 and L18.

This is one of the proteins that binds to the 5S RNA in the ribosome where it forms part of the central protuberance. This is Large ribosomal subunit protein bL25 from Mycobacterium leprae (strain TN).